A 167-amino-acid polypeptide reads, in one-letter code: NAD(P)H-quinone oxidoreductase subunit I, chloroplastic (167 aa).

2 consecutive 4Fe-4S ferredoxin-type domains span residues 55–84 (GRIH…VDWK) and 95–124 (LNYS…MTEE). [4Fe-4S] cluster-binding residues include C64, C67, C70, C74, C104, C107, C110, and C114.

It belongs to the complex I 23 kDa subunit family. NDH is composed of at least 16 different subunits, 5 of which are encoded in the nucleus. Requires [4Fe-4S] cluster as cofactor.

It is found in the plastid. Its subcellular location is the chloroplast thylakoid membrane. The enzyme catalyses a plastoquinone + NADH + (n+1) H(+)(in) = a plastoquinol + NAD(+) + n H(+)(out). It carries out the reaction a plastoquinone + NADPH + (n+1) H(+)(in) = a plastoquinol + NADP(+) + n H(+)(out). Functionally, NDH shuttles electrons from NAD(P)H:plastoquinone, via FMN and iron-sulfur (Fe-S) centers, to quinones in the photosynthetic chain and possibly in a chloroplast respiratory chain. The immediate electron acceptor for the enzyme in this species is believed to be plastoquinone. Couples the redox reaction to proton translocation, and thus conserves the redox energy in a proton gradient. This Eucalyptus globulus subsp. globulus (Tasmanian blue gum) protein is NAD(P)H-quinone oxidoreductase subunit I, chloroplastic.